Consider the following 810-residue polypeptide: Glycerol-3-phosphate acyltransferase (810 aa).

Residues 305–310 (CHRSHI) carry the HXXXXD motif motif.

It belongs to the GPAT/DAPAT family.

The protein resides in the cell inner membrane. The enzyme catalyses sn-glycerol 3-phosphate + an acyl-CoA = a 1-acyl-sn-glycero-3-phosphate + CoA. It participates in phospholipid metabolism; CDP-diacylglycerol biosynthesis; CDP-diacylglycerol from sn-glycerol 3-phosphate: step 1/3. This Haemophilus influenzae (strain 86-028NP) protein is Glycerol-3-phosphate acyltransferase.